The primary structure comprises 461 residues: MVRELLEKARGLSIYTAYNTNVDAIVYLNGETVQRLIDEFGADAVRKRMEDYPREINEPLDFVARLVHALKTGKPMAVPLVNEELHTWFDSHFRYDVERMGGQAGIIANLLSNLDFREVIVYTPHLAKRQAEMFVRKPNLFYPVVEGGRLVLKHPWEAYREGDPVKVNRIFEFRAGTAFKLGDERIVVPFSGRFIVSARFESIRIYTEPGLRPFLPEIGERVDGAILSGYQGINLRYSDGKDANYYLRKAKEDIMLLKREKDLKVHLEFASIQSRELRKKVIYNLFPLADSVGMDEAEIAYVLSALGYDELADRIFTYNRIEDTVLGGKILLDEMNLDVLQIHTIYYIMYITHADNPLSEEELRRSLELATTLAASRASLGDITSPDQIEIGLRVPYNERGEYVKLRFEEAKRKLRTKEYKLVIIPTRLVQNPVSTVGLGDTISTGAFASYLAMLKEKGEL.

One can recognise an ADPK domain in the interval 1-457 (MVRELLEKAR…FASYLAMLKE (457 aa)). 3 residues coordinate Mg(2+): Glu268, Glu298, and Asp441. Residue Asp441 is the Proton acceptor of the active site.

The protein belongs to the carbohydrate kinase PfkC family. The cofactor is Mg(2+).

The protein resides in the cytoplasm. The enzyme catalyses beta-D-fructose 6-phosphate + ADP = beta-D-fructose 1,6-bisphosphate + AMP + H(+). The protein operates within carbohydrate degradation; glycolysis. Functionally, catalyzes the phosphorylation of fructose 6-phosphate to fructose 1,6-bisphosphate using ADP as the phosphate donor. In Thermococcus zilligii, this protein is ADP-specific phosphofructokinase.